We begin with the raw amino-acid sequence, 165 residues long: Ixolaris (165 aa).

The N-terminal stretch at 1–26 (MRAVSCFLYYGVAWIALGSWGASSSA) is a signal peptide. 2 consecutive BPTI/Kunitz inhibitor domains span residues 43 to 93 (CLDP…NESC) and 101 to 151 (CSLE…KETC). Cystine bridges form between Cys43-Cys93, Cys51-Cys76, Cys68-Cys89, Cys101-Cys151, and Cys126-Cys147. Asn90 and Asn123 each carry an N-linked (GlcNAc...) asparagine glycan. Residue Asn161 is glycosylated (N-linked (GlcNAc...) asparagine).

In terms of assembly, monomer. Interacts with host coagulation factor X/F10 (inactive and activated). In terms of tissue distribution, saliva (at protein level). Salivary gland.

Its subcellular location is the secreted. In terms of biological role, anticoagulant protein that modulates blood feeding of ticks on vertebrate species. Inhibits activation of host blood coagulation factor X (F10). Inhibits activity of host coagulation factor VIIa-tissue factor (F7-F3) complex in a factor X/Xa-dependent manner. Prevents interaction between host coagulation factor X and activated factor VIIIa (F8). In Ixodes scapularis (Black-legged tick), this protein is Ixolaris.